Here is a 1079-residue protein sequence, read N- to C-terminus: Translation initiation factor IF-2 (1079 aa).

3 stretches are compositionally biased toward basic and acidic residues: residues 52–65 (VQAQRDGGARKEGN), 75–90 (RDGDRASARAEAKAPE), and 102–134 (APERAEEADKPAVAKPAKAPETEAHARARKEPQ). Residues 52–488 (VQAQRDGGAR…RGKKDVRPAA (437 aa)) form a disordered region. The span at 150-184 (APVAKVVEAAPAETPAPEAPAVKATVTAEAAPAKT) shows a compositional bias: low complexity. The segment covering 185–194 (VEPESERPQA) has biased composition (basic and acidic residues). Residues 276 to 291 (AAVAQQQMQQQAAQQQ) are compositionally biased toward low complexity. The span at 306-327 (GGYRPEGQREGGYRPEGQREGG) shows a compositional bias: basic and acidic residues. 2 stretches are compositionally biased toward low complexity: residues 348–370 (EGGYRPGAPRPEGGYRPAGGPRP) and 380–398 (PGAPRPEGGYRPAGGAPRP). Residues 419-429 (PRPGGFGGAPG) show a composition bias toward gly residues. Residues 461–471 (PRGRSDDDVMR) are compositionally biased toward basic and acidic residues. The segment covering 473–482 (PRGRGKRGKK) has biased composition (basic residues). The region spanning 578–745 (TRPPVVTIMG…LIAIQAEILE (168 aa)) is the tr-type G domain. The tract at residues 587–594 (GHVDHGKT) is G1. Residue 587 to 594 (GHVDHGKT) participates in GTP binding. The segment at 612-616 (GITQH) is G2. The segment at 633-636 (DTPG) is G3. GTP contacts are provided by residues 633 to 637 (DTPGH) and 687 to 690 (NKMD). The G4 stretch occupies residues 687-690 (NKMD). Residues 723–725 (SAK) form a G5 region.

Belongs to the TRAFAC class translation factor GTPase superfamily. Classic translation factor GTPase family. IF-2 subfamily.

Its subcellular location is the cytoplasm. Functionally, one of the essential components for the initiation of protein synthesis. Protects formylmethionyl-tRNA from spontaneous hydrolysis and promotes its binding to the 30S ribosomal subunits. Also involved in the hydrolysis of GTP during the formation of the 70S ribosomal complex. This Nitratidesulfovibrio vulgaris (strain ATCC 29579 / DSM 644 / CCUG 34227 / NCIMB 8303 / VKM B-1760 / Hildenborough) (Desulfovibrio vulgaris) protein is Translation initiation factor IF-2.